A 72-amino-acid chain; its full sequence is Translation initiation factor IF-1 (72 aa).

The region spanning 1–72 (MAKEDVIEVE…NRGRIIYRFK (72 aa)) is the S1-like domain.

This sequence belongs to the IF-1 family. Component of the 30S ribosomal translation pre-initiation complex which assembles on the 30S ribosome in the order IF-2 and IF-3, IF-1 and N-formylmethionyl-tRNA(fMet); mRNA recruitment can occur at any time during PIC assembly.

The protein resides in the cytoplasm. Its function is as follows. One of the essential components for the initiation of protein synthesis. Stabilizes the binding of IF-2 and IF-3 on the 30S subunit to which N-formylmethionyl-tRNA(fMet) subsequently binds. Helps modulate mRNA selection, yielding the 30S pre-initiation complex (PIC). Upon addition of the 50S ribosomal subunit IF-1, IF-2 and IF-3 are released leaving the mature 70S translation initiation complex. The sequence is that of Translation initiation factor IF-1 from Syntrophomonas wolfei subsp. wolfei (strain DSM 2245B / Goettingen).